Here is a 267-residue protein sequence, read N- to C-terminus: Indole-3-glycerol phosphate synthase (267 aa).

This sequence belongs to the TrpC family.

The catalysed reaction is 1-(2-carboxyphenylamino)-1-deoxy-D-ribulose 5-phosphate + H(+) = (1S,2R)-1-C-(indol-3-yl)glycerol 3-phosphate + CO2 + H2O. The protein operates within amino-acid biosynthesis; L-tryptophan biosynthesis; L-tryptophan from chorismate: step 4/5. This Ralstonia pickettii (strain 12J) protein is Indole-3-glycerol phosphate synthase.